A 192-amino-acid polypeptide reads, in one-letter code: Ribosomal RNA small subunit methyltransferase G (192 aa).

S-adenosyl-L-methionine is bound by residues Gly63, Phe68, 112–113 (IE), and Arg125.

It belongs to the methyltransferase superfamily. RNA methyltransferase RsmG family.

Its subcellular location is the cytoplasm. It catalyses the reaction guanosine(527) in 16S rRNA + S-adenosyl-L-methionine = N(7)-methylguanosine(527) in 16S rRNA + S-adenosyl-L-homocysteine. Specifically methylates the N7 position of guanine in position 527 of 16S rRNA. The protein is Ribosomal RNA small subunit methyltransferase G of Rickettsia bellii (strain OSU 85-389).